We begin with the raw amino-acid sequence, 417 residues long: Serine--tRNA ligase (417 aa).

226 to 228 lines the L-serine pocket; the sequence is TSE. Residues 257 to 259 and Val-273 each bind ATP; that span reads RRE. Glu-280 serves as a coordination point for L-serine. ATP is bound at residue 344-347; the sequence is EVTS. L-serine is bound at residue Thr-379.

The protein belongs to the class-II aminoacyl-tRNA synthetase family. Type-1 seryl-tRNA synthetase subfamily. Homodimer. The tRNA molecule binds across the dimer.

The protein resides in the cytoplasm. It carries out the reaction tRNA(Ser) + L-serine + ATP = L-seryl-tRNA(Ser) + AMP + diphosphate + H(+). It catalyses the reaction tRNA(Sec) + L-serine + ATP = L-seryl-tRNA(Sec) + AMP + diphosphate + H(+). It functions in the pathway aminoacyl-tRNA biosynthesis; selenocysteinyl-tRNA(Sec) biosynthesis; L-seryl-tRNA(Sec) from L-serine and tRNA(Sec): step 1/1. In terms of biological role, catalyzes the attachment of serine to tRNA(Ser). Is also able to aminoacylate tRNA(Sec) with serine, to form the misacylated tRNA L-seryl-tRNA(Sec), which will be further converted into selenocysteinyl-tRNA(Sec). The protein is Serine--tRNA ligase of Tropheryma whipplei (strain TW08/27) (Whipple's bacillus).